A 175-amino-acid polypeptide reads, in one-letter code: Cytochrome c homolog (175 aa).

Topologically, residues 1-8 (MSGKELNK) are cytoplasmic. Residues 9–29 (IVAAILFASLIAMMVGFVANI) form a helical; Signal-anchor membrane-spanning segment. Over 30-175 (LYKPTLELQH…LFLKTYVHDK (146 aa)) the chain is Periplasmic. The heme c site is built by Cys84, Cys87, His88, and Met150.

Belongs to the cytochrome c family. Post-translationally, binds 1 heme c group covalently per subunit.

It is found in the cell membrane. Its function is as follows. May be involved in electron transfer from bc1 complex to aa3. In Rickettsia felis (strain ATCC VR-1525 / URRWXCal2) (Rickettsia azadi), this protein is Cytochrome c homolog (cycM).